The sequence spans 342 residues: MSLLDMGGDMMEDDWEFASSSNPKRTLVLVGRTGNGKSATGNSILGRKAFRSRARTVGVTSTCESQRVVQEDGDIINVVDTPGLFDLSTAADFIGKEIVRCISLAEDGIHAILLVFSVRRLAEEEQTVLSFLQALFGSKIADYMIVVFTGGDELEENEETLEEYLADYCPEFLKEILGICDNRLVLFNNKTTDKVKKAEQVQKLLSLVESVVKQNNGKPYSDELFHELQEEAIKLRDQKKEVELLQGYSNNEIDEFKKQIDMSYDRQLSRITEMVETKLRDTAKRLEQQLGEEQAARLEAEKRANEVQKRSSDEIKKLRENLERAEKETKELQKKLGKCINL.

The AIG1-type G domain occupies 22-229; that stretch reads NPKRTLVLVG…YSDELFHELQ (208 aa). The G1 stretch occupies residues 31 to 38; sequence GRTGNGKS. GTP-binding positions include 31–39 and S52; that span reads GRTGNGKSA. A G2 region spans residues 58 to 62; sequence GVTST. The segment at 80–83 is G3; it reads DTPG. Positions 149-152 are G4; that stretch reads TGGD. Residues 188 to 190 are G5; it reads NNK. N189 provides a ligand contact to GTP. Residues 276–342 are a coiled coil; it reads ETKLRDTAKR…QKKLGKCINL (67 aa).

The protein belongs to the TRAFAC class TrmE-Era-EngA-EngB-Septin-like GTPase superfamily. AIG1/Toc34/Toc159-like paraseptin GTPase family. IAN subfamily. In terms of tissue distribution, mainly expressed in leaves.

In Arabidopsis thaliana (Mouse-ear cress), this protein is Immune-associated nucleotide-binding protein 9.